The primary structure comprises 884 residues: Alanine--tRNA ligase (884 aa).

Zn(2+) is bound by residues His-574, His-578, Cys-675, and His-679.

Belongs to the class-II aminoacyl-tRNA synthetase family. Requires Zn(2+) as cofactor.

It localises to the cytoplasm. The enzyme catalyses tRNA(Ala) + L-alanine + ATP = L-alanyl-tRNA(Ala) + AMP + diphosphate. Catalyzes the attachment of alanine to tRNA(Ala) in a two-step reaction: alanine is first activated by ATP to form Ala-AMP and then transferred to the acceptor end of tRNA(Ala). Also edits incorrectly charged Ser-tRNA(Ala) and Gly-tRNA(Ala) via its editing domain. The polypeptide is Alanine--tRNA ligase (Ralstonia nicotianae (strain ATCC BAA-1114 / GMI1000) (Ralstonia solanacearum)).